A 145-amino-acid chain; its full sequence is Basic phospholipase A2 cPt09 (145 aa).

The first 21 residues, Met-1–Thr-21, serve as a signal peptide directing secretion. A propeptide spanning residues Ile-22–Leu-27 is cleaved from the precursor. Cystine bridges form between Cys-38-Cys-98, Cys-54-Cys-144, Cys-56-Cys-72, Cys-71-Cys-125, Cys-78-Cys-118, Cys-87-Cys-111, and Cys-105-Cys-116. Tyr-55, Gly-57, and Gly-59 together coordinate Ca(2+). The active site involves His-75. Residue Asp-76 participates in Ca(2+) binding. Asp-119 is a catalytic residue.

Belongs to the phospholipase A2 family. Group I subfamily. D49 sub-subfamily. Requires Ca(2+) as cofactor. As to expression, expressed by the venom gland.

The protein resides in the secreted. The enzyme catalyses a 1,2-diacyl-sn-glycero-3-phosphocholine + H2O = a 1-acyl-sn-glycero-3-phosphocholine + a fatty acid + H(+). Functionally, PLA2 catalyzes the calcium-dependent hydrolysis of the 2-acyl groups in 3-sn-phosphoglycerides. This chain is Basic phospholipase A2 cPt09, found in Laticauda semifasciata (Black-banded sea krait).